A 503-amino-acid chain; its full sequence is Glycerol kinase (503 aa).

Thr14 contributes to the ADP binding site. Positions 14, 15, and 16 each coordinate ATP. Thr14 is a binding site for sn-glycerol 3-phosphate. An ADP-binding site is contributed by Arg18. Arg84, Glu85, Tyr136, and Asp246 together coordinate sn-glycerol 3-phosphate. Residues Arg84, Glu85, Tyr136, Asp246, and Gln247 each contribute to the glycerol site. Residues Thr268 and Gly311 each coordinate ADP. ATP is bound by residues Thr268, Gly311, Gln315, and Gly412. Residues Gly412 and Asn416 each coordinate ADP.

Belongs to the FGGY kinase family. As to quaternary structure, homotetramer and homodimer (in equilibrium). Heterodimer with EIIA-Glc. Binds 1 zinc ion per glycerol kinase EIIA-Glc dimer. The zinc ion is important for dimerization.

The enzyme catalyses glycerol + ATP = sn-glycerol 3-phosphate + ADP + H(+). It participates in polyol metabolism; glycerol degradation via glycerol kinase pathway; sn-glycerol 3-phosphate from glycerol: step 1/1. Activity of this regulatory enzyme is affected by several metabolites. Allosterically and non-competitively inhibited by fructose 1,6-bisphosphate (FBP) and unphosphorylated phosphocarrier protein EIIA-Glc (III-Glc), an integral component of the bacterial phosphotransferase (PTS) system. Its function is as follows. Key enzyme in the regulation of glycerol uptake and metabolism. Catalyzes the phosphorylation of glycerol to yield sn-glycerol 3-phosphate. This is Glycerol kinase from Klebsiella pneumoniae (strain 342).